The chain runs to 235 residues: Thiopurine S-methyltransferase (235 aa).

Positions 13, 48, 69, and 126 each coordinate S-adenosyl-L-methionine. The disordered stretch occupies residues 199–235 (PDPQNGAPRRVEHKVYQLTGKRPASPEADGRAAETED). The segment covering 226 to 235 (ADGRAAETED) has biased composition (basic and acidic residues).

The protein belongs to the class I-like SAM-binding methyltransferase superfamily. TPMT family.

It is found in the cytoplasm. It catalyses the reaction S-adenosyl-L-methionine + a thiopurine = S-adenosyl-L-homocysteine + a thiopurine S-methylether.. In Stutzerimonas stutzeri (strain A1501) (Pseudomonas stutzeri), this protein is Thiopurine S-methyltransferase.